Consider the following 398-residue polypeptide: Histidinol-phosphate aminotransferase (398 aa).

The span at 1–10 shows a compositional bias: polar residues; the sequence is MTGQRATPQP. A disordered region spans residues 1-30; that stretch reads MTGQRATPQPTLDDLPLRDDLRGKSPYGAP. The residue at position 234 (Lys234) is an N6-(pyridoxal phosphate)lysine.

This sequence belongs to the class-II pyridoxal-phosphate-dependent aminotransferase family. Histidinol-phosphate aminotransferase subfamily. In terms of assembly, homodimer. Pyridoxal 5'-phosphate serves as cofactor.

It catalyses the reaction L-histidinol phosphate + 2-oxoglutarate = 3-(imidazol-4-yl)-2-oxopropyl phosphate + L-glutamate. It participates in amino-acid biosynthesis; L-histidine biosynthesis; L-histidine from 5-phospho-alpha-D-ribose 1-diphosphate: step 7/9. This Mycolicibacterium paratuberculosis (strain ATCC BAA-968 / K-10) (Mycobacterium paratuberculosis) protein is Histidinol-phosphate aminotransferase.